Reading from the N-terminus, the 240-residue chain is 4-hydroxy-tetrahydrodipicolinate reductase (240 aa).

NAD(+)-binding positions include 79–81 (ATT) and 103–106 (SANM). Catalysis depends on H135, which acts as the Proton donor/acceptor. A (S)-2,3,4,5-tetrahydrodipicolinate-binding site is contributed by H136. Catalysis depends on K139, which acts as the Proton donor. (S)-2,3,4,5-tetrahydrodipicolinate is bound at residue 145 to 146 (GT).

The protein belongs to the DapB family.

The protein localises to the cytoplasm. It catalyses the reaction (S)-2,3,4,5-tetrahydrodipicolinate + NAD(+) + H2O = (2S,4S)-4-hydroxy-2,3,4,5-tetrahydrodipicolinate + NADH + H(+). It carries out the reaction (S)-2,3,4,5-tetrahydrodipicolinate + NADP(+) + H2O = (2S,4S)-4-hydroxy-2,3,4,5-tetrahydrodipicolinate + NADPH + H(+). Its pathway is amino-acid biosynthesis; L-lysine biosynthesis via DAP pathway; (S)-tetrahydrodipicolinate from L-aspartate: step 4/4. Its function is as follows. Catalyzes the conversion of 4-hydroxy-tetrahydrodipicolinate (HTPA) to tetrahydrodipicolinate. The protein is 4-hydroxy-tetrahydrodipicolinate reductase of Staphylococcus aureus (strain USA300).